Consider the following 630-residue polypeptide: MGSALSSCCSPRRKNAYEPLLLETEREAVADLLQYLENRSTTNFFAGSPLAALTTLSFSENVDLQRSAALAFAEITEKEVREVGRDTLDPVLYLLSSHDPEVQRAASAALGNLAVNAENKLLVVSLGGLEPLIRQMLSPNVEVQCNAVGCITNLATHDENKTQIAKSGALVPLTRLAKSKDMRVQRNATGALLNMTHSDENRQQLVAAGAIPVLVSLLNSPDTDVQYYCTTALSNIAVDAANRKKLAQSEPKLVQSLVQLMDSQSLKVQCQAALALRNLASDSKYQLEIVKFGGLKPLLRLLHSSYLPLILSAAACVRNVSIHPANESPIIESGFLQPLIELLSFDENEEVQCHAISTLRNLAASSEKNKGAIVEAGAVEKIKSLVLTVPLAVQSEMTACVAVLALSDDLKPQLLEMGICEVLIPLTNSPSVEVQGNSAAALGNLSSKAAEDYAPFNAVWNKPDGGLHAYLVRFLSSADITFQHIAVWTIVQLLEAEDEQLTNNIRSSPILISSIRQLAKSPPPSRAGGAPRHDPNDPSAGSSEDEFEDGLTDQEGEGEIVSLARRILDLTEVGEEGDEFGERAGRNVPVGSHGQAPGQGQTSQVGSMGSEHAALRASVHRALSGGGRDR.

Residue Gly2 is the site of N-myristoyl glycine attachment. ARM repeat units follow at residues 74 to 115 (EITE…NLAV), 117 to 156 (AENK…NLAT), 158 to 197 (DENK…NMTH), 199 to 238 (DENR…NIAV), 242 to 281 (NRKK…NLAS), 283 to 322 (SKYQ…NVSI), 324 to 364 (PANE…NLAA), 408 to 447 (DDLK…NLSS), and 456 to 495 (FNAV…QLLE). Disordered stretches follow at residues 519–558 (AKSP…EGEG) and 572–630 (EVGE…GRDR). Positions 543–558 (SEDEFEDGLTDQEGEG) are enriched in acidic residues. Residues 598–607 (GQGQTSQVGS) are compositionally biased toward polar residues.

It belongs to the beta-catenin family.

It localises to the vacuole membrane. Its function is as follows. Functions in both vacuole inheritance and protein targeting from the cytoplasm to vacuole. This Cryptococcus neoformans var. neoformans serotype D (strain B-3501A) (Filobasidiella neoformans) protein is Vacuolar protein 8 (VAC8).